The following is a 150-amino-acid chain: Small ribosomal subunit protein uS13 (150 aa).

The tract at residues 131 to 150 is disordered; it reads QRTKSTFRRGPTVGVSRRKK.

It belongs to the universal ribosomal protein uS13 family. As to quaternary structure, part of the 30S ribosomal subunit. Forms a loose heterodimer with protein S19. Forms two bridges to the 50S subunit in the 70S ribosome.

Functionally, located at the top of the head of the 30S subunit, it contacts several helices of the 16S rRNA. In the 70S ribosome it contacts the 23S rRNA (bridge B1a) and protein L5 of the 50S subunit (bridge B1b), connecting the 2 subunits; these bridges are implicated in subunit movement. This is Small ribosomal subunit protein uS13 from Methanocaldococcus jannaschii (strain ATCC 43067 / DSM 2661 / JAL-1 / JCM 10045 / NBRC 100440) (Methanococcus jannaschii).